The sequence spans 274 residues: MKKILLLHMLVFVSATLPISSVASDEVETLKCTIIADAITGNTLYETGECARRVSPCSSFKLPLAIMGFDSGILQSPKSPTWELKPEYNPSPRDRTYKQVYPALWQSDSVVWFSQQLTSRLGVDRFTEYVKKFEYGNQDVSGDSGKHNGLTQSWLMSSLTISPKEQIQFLLRFVAHKLPVSEAAYDMAYATIPQYQAAEGWAVHGKSGSGWLRDNNGKINESRPQGWFVGWAEKNGRQVVFARLEIGKEKSDIPGGSKAREDILVELPVLMGNK.

Positions 1 to 24 (MKKILLLHMLVFVSATLPISSVAS) are cleaved as a signal peptide. Serine 58 serves as the catalytic Acyl-ester intermediate. Lysine 61 bears the N6-carboxylysine mark. 206–208 (KSG) lines the substrate pocket.

The protein belongs to the class-D beta-lactamase family.

It carries out the reaction a beta-lactam + H2O = a substituted beta-amino acid. In terms of biological role, oxacillin-hydrolyzing beta-lactamase. Confers resistance to beta-lactam antibiotics but at a significantly lower level than the TEM bla gene product. This Klebsiella aerogenes (Enterobacter aerogenes) protein is Beta-lactamase OXA-9 (bla).